The chain runs to 39 residues: Photosystem II reaction center protein L (39 aa).

Residues 16 to 37 (RTSLYLGLLLVAVLGILFSSYF) traverse the membrane as a helical segment.

The protein belongs to the PsbL family. In terms of assembly, PSII is composed of 1 copy each of membrane proteins PsbA, PsbB, PsbC, PsbD, PsbE, PsbF, PsbH, PsbI, PsbJ, PsbK, PsbL, PsbM, PsbT, PsbX, PsbY, PsbZ, Psb30/Ycf12, peripheral proteins PsbO, CyanoQ (PsbQ), PsbU, PsbV and a large number of cofactors. It forms dimeric complexes.

The protein localises to the cellular thylakoid membrane. Its function is as follows. One of the components of the core complex of photosystem II (PSII). PSII is a light-driven water:plastoquinone oxidoreductase that uses light energy to abstract electrons from H(2)O, generating O(2) and a proton gradient subsequently used for ATP formation. It consists of a core antenna complex that captures photons, and an electron transfer chain that converts photonic excitation into a charge separation. This subunit is found at the monomer-monomer interface and is required for correct PSII assembly and/or dimerization. Required for PSII activity, at least in part due to its effects on PSII assembly. May make specific contact(s) with lipids. In Synechocystis sp. (strain ATCC 27184 / PCC 6803 / Kazusa), this protein is Photosystem II reaction center protein L.